Reading from the N-terminus, the 213-residue chain is MKLTIALSKGRIFEETLPLLAAAGIVPAENPESSRKLIIGTNHPDVQLVIVRASDVPTYVQYGAADLGIAGRDVLIEHGGAGLYQPLDLNIAKCKMMVAVQEGFDYDAAVRRGARLKIATKYPQIAREHFAKKGVHVDIIKLYGSMELAPLVGLADAIVDLVSTGGTLRANKLAAVEHIIDISSRLVVNQAALKLKYDAIQPVLDAFAGAVPA.

It belongs to the ATP phosphoribosyltransferase family. Short subfamily. In terms of assembly, heteromultimer composed of HisG and HisZ subunits.

The protein localises to the cytoplasm. The catalysed reaction is 1-(5-phospho-beta-D-ribosyl)-ATP + diphosphate = 5-phospho-alpha-D-ribose 1-diphosphate + ATP. Its pathway is amino-acid biosynthesis; L-histidine biosynthesis; L-histidine from 5-phospho-alpha-D-ribose 1-diphosphate: step 1/9. In terms of biological role, catalyzes the condensation of ATP and 5-phosphoribose 1-diphosphate to form N'-(5'-phosphoribosyl)-ATP (PR-ATP). Has a crucial role in the pathway because the rate of histidine biosynthesis seems to be controlled primarily by regulation of HisG enzymatic activity. The chain is ATP phosphoribosyltransferase from Chromobacterium violaceum (strain ATCC 12472 / DSM 30191 / JCM 1249 / CCUG 213 / NBRC 12614 / NCIMB 9131 / NCTC 9757 / MK).